The chain runs to 1013 residues: Endosome/lysosome-associated apoptosis and autophagy regulator 1 (1013 aa).

Positions 1 to 41 (MAEPGHSHHLSARVRGRTERRIPRLWRLLLWAGTAFQVTQG) are cleaved as a signal peptide. Residues 42–910 (TGPELHACKE…ICKTIDFWLK (869 aa)) lie on the Extracellular side of the membrane. Asn-153 is a glycosylation site (N-linked (GlcNAc...) asparagine). 3 disulfide bridges follow: Cys-278–Cys-295, Cys-308–Cys-330, and Cys-311–Cys-342. N-linked (GlcNAc...) asparagine glycans are attached at residues Asn-404 and Asn-672. The MRH domain maps to 656–858 (NDCTFSRNTP…LWESAAACPL (203 aa)). 4 disulfide bridges follow: Cys-658-Cys-704, Cys-714-Cys-739, Cys-808-Cys-844, and Cys-820-Cys-856. A helical membrane pass occupies residues 911 to 931 (VGISAGTCTAILLTVLTCYFW). Over 932-1013 (KKNQKLEYKY…TSSGGLDMDL (82 aa)) the chain is Cytoplasmic.

Belongs to the ELAPOR family. In terms of assembly, interacts with HSPA5; may regulate the function of HSPA5 in apoptosis and cell proliferation. In terms of tissue distribution, expressed in normal endometrium but overexpressed in endometroid tumors.

It localises to the cell membrane. The protein resides in the late endosome membrane. The protein localises to the golgi apparatus. Its subcellular location is the trans-Golgi network membrane. It is found in the lysosome membrane. It localises to the endoplasmic reticulum membrane. Functionally, may protect cells from cell death by inducing cytosolic vacuolization and up-regulating the autophagy pathway. May play a role in apoptosis and cell proliferation through its interaction with HSPA5. The polypeptide is Endosome/lysosome-associated apoptosis and autophagy regulator 1 (Homo sapiens (Human)).